A 198-amino-acid polypeptide reads, in one-letter code: Nucleoid occlusion factor SlmA (198 aa).

Residues 10–70 form the HTH tetR-type domain; that stretch reads NRREEILQSL…SLIEFIEDSL (61 aa). Positions 33–52 form a DNA-binding region, H-T-H motif; it reads TTAKLAASVGVSEAALYRHF. Residues 117-144 adopt a coiled-coil conformation; sequence EQDRLQGRINQLFERIEAQLRQVLREKR.

This sequence belongs to the nucleoid occlusion factor SlmA family. Homodimer. Interacts with FtsZ.

It is found in the cytoplasm. The protein resides in the nucleoid. In terms of biological role, required for nucleoid occlusion (NO) phenomenon, which prevents Z-ring formation and cell division over the nucleoid. Acts as a DNA-associated cell division inhibitor that binds simultaneously chromosomal DNA and FtsZ, and disrupts the assembly of FtsZ polymers. SlmA-DNA-binding sequences (SBS) are dispersed on non-Ter regions of the chromosome, preventing FtsZ polymerization at these regions. This chain is Nucleoid occlusion factor SlmA, found in Escherichia coli O45:K1 (strain S88 / ExPEC).